Reading from the N-terminus, the 241-residue chain is Chaperone protein HifB (241 aa).

The N-terminal stretch at 1-27 is a signal peptide; sequence MGKTMFKKTLLFFTALFFAALCAFSAN.

Belongs to the periplasmic pilus chaperone family.

It localises to the periplasm. Its function is as follows. Mediates assembly of pili by forming soluble multimeric complexes with pili subunits as an intermediate step in the assembly process. This protein is involved in type B pili (HifA) assembly. This Haemophilus influenzae protein is Chaperone protein HifB (hifB).